A 500-amino-acid chain; its full sequence is L-arabinose isomerase (500 aa).

4 residues coordinate Mn(2+): glutamate 306, glutamate 333, histidine 350, and histidine 450.

It belongs to the arabinose isomerase family. In terms of assembly, homohexamer. The cofactor is Mn(2+).

It catalyses the reaction beta-L-arabinopyranose = L-ribulose. It participates in carbohydrate degradation; L-arabinose degradation via L-ribulose; D-xylulose 5-phosphate from L-arabinose (bacterial route): step 1/3. Functionally, catalyzes the conversion of L-arabinose to L-ribulose. This chain is L-arabinose isomerase, found in Shigella flexneri serotype 5b (strain 8401).